The following is a 700-amino-acid chain: Translation initiation factor IF-2 (700 aa).

Residues 58–85 are disordered; it reads KKEVKKQKEPSKEKGKSSEQVKVKEKSK. In terms of domain architecture, tr-type G spans 191-365; sequence PRPPVVTIMG…EMQEIRCIPD (175 aa). Positions 200-207 are G1; the sequence is GHVDHGKT. 200-207 is a GTP binding site; it reads GHVDHGKT. The segment at 225-229 is G2; the sequence is GITQS. The G3 stretch occupies residues 246–249; it reads DTPG. GTP is bound by residues 246–250 and 300–303; these read DTPGH and NKID. Residues 300–303 form a G4 region; it reads NKID. Positions 337-339 are G5; the sequence is SAK.

It belongs to the TRAFAC class translation factor GTPase superfamily. Classic translation factor GTPase family. IF-2 subfamily.

The protein resides in the cytoplasm. One of the essential components for the initiation of protein synthesis. Protects formylmethionyl-tRNA from spontaneous hydrolysis and promotes its binding to the 30S ribosomal subunits. Also involved in the hydrolysis of GTP during the formation of the 70S ribosomal complex. The chain is Translation initiation factor IF-2 from Petrotoga mobilis (strain DSM 10674 / SJ95).